Reading from the N-terminus, the 665-residue chain is Envelope glycoprotein (665 aa).

The N-terminal stretch at 1 to 31 (MESTTLSKPFKNQVNPWGPLIVLLILGRVNP) is a signal peptide. Residues 32–267 (VALGNSPHQV…KITDSGPRVP (236 aa)) form a receptor-binding domain (RBD) region. Residues 32–605 (VALGNSPHQV…FNGSPWFTTL (574 aa)) lie on the Extracellular side of the membrane. An N-linked (GlcNAc...) asparagine; by host glycan is attached at Asn-43. Cystine bridges form between Cys-77/Cys-129, Cys-103/Cys-118, Cys-104/Cys-114, Cys-152/Cys-172, and Cys-164/Cys-177. Residue Asp-117 coordinates Zn(2+). Asn-199 and Asn-211 each carry an N-linked (GlcNAc...) asparagine; by host glycan. Cysteines 209 and 215 form a disulfide. The interval 266-307 (VPIGPNPVLSDQRPPSQPRSPPHSNSTPTETPLTLPEPPPAG) is disordered. N-linked (GlcNAc...) asparagine; by host glycosylation occurs at Asn-324. Disulfide bonds link Cys-334/Cys-337, Cys-334/Cys-558, Cys-364/Cys-418, Cys-383/Cys-395, Cys-425/Cys-438, and Cys-550/Cys-557. The short motif at 334–337 (CWLC) is the CXXC element. Residues Asn-356 and Asn-363 are each glycosylated (N-linked (GlcNAc...) asparagine; by host). N-linked (GlcNAc...) asparagine; by host glycosylation is found at Asn-396, Asn-400, and Asn-432. Residues 470–490 (VSLTLALLLGGLTMGGIAAGI) are fusion peptide. The stretch at 505-532 (AAVHDDLKEVEKSITNLEKSLTSLSEVV) forms a coiled coil. The segment at 533 to 549 (LQNRRGLDLLFLKEGGL) is immunosuppression. The CX6CC motif lies at 550 to 558 (CAALKEECC). The chain crosses the membrane as a helical span at residues 606–626 (ISTIMGPLIVLLLILLLGPCI). Residue Cys-625 is the site of S-palmitoyl cysteine; by host attachment. Topologically, residues 627 to 665 (LNRLVQFVKDRISVVQALVLTQQYHQLKSIDPEEMESRE) are cytoplasmic. Residues 650–653 (YHQL) carry the YXXL motif; contains endocytosis signal motif.

The mature envelope protein (Env) consists of a trimer of SU-TM heterodimers attached by a labile interchain disulfide bond. Post-translationally, specific enzymatic cleavages in vivo yield mature proteins. Envelope glycoproteins are synthesized as an inactive precursor that is N-glycosylated and processed likely by host cell furin or by a furin-like protease in the Golgi to yield the mature SU and TM proteins. The cleavage site between SU and TM requires the minimal sequence [KR]-X-[KR]-R. The R-peptide is released from the C-terminus of the cytoplasmic tail of the TM protein upon particle formation as a result of proteolytic cleavage by the viral protease. Cleavage of this peptide is required for TM to become fusogenic. The CXXC motif is highly conserved across a broad range of retroviral envelope proteins. It is thought to participate in the formation of a labile disulfide bond possibly with the CX6CC motif present in the transmembrane protein. Isomerization of the intersubunit disulfide bond to an SU intrachain disulfide bond is thought to occur upon receptor recognition in order to allow membrane fusion. In terms of processing, the transmembrane protein is palmitoylated. Post-translationally, the R-peptide is palmitoylated.

Its subcellular location is the virion membrane. The protein localises to the host cell membrane. The surface protein (SU) attaches the virus to the host cell by binding to its receptor. This interaction triggers the refolding of the transmembrane protein (TM) and is thought to activate its fusogenic potential by unmasking its fusion peptide. Fusion occurs at the host cell plasma membrane. Functionally, the transmembrane protein (TM) acts as a class I viral fusion protein. Under the current model, the protein has at least 3 conformational states: pre-fusion native state, pre-hairpin intermediate state, and post-fusion hairpin state. During viral and target cell membrane fusion, the coiled coil regions (heptad repeats) assume a trimer-of-hairpins structure, positioning the fusion peptide in close proximity to the C-terminal region of the ectodomain. The formation of this structure appears to drive apposition and subsequent fusion of viral and target cell membranes. Membranes fusion leads to delivery of the nucleocapsid into the cytoplasm. The sequence is that of Envelope glycoprotein (env) from Radiation murine leukemia virus.